The chain runs to 460 residues: Serine hydroxymethyltransferase, cytosolic (460 aa).

Residue Lys244 is modified to N6-(pyridoxal phosphate)lysine.

This sequence belongs to the SHMT family. In terms of assembly, homotetramer. The cofactor is pyridoxal 5'-phosphate.

The protein localises to the cytoplasm. The enzyme catalyses (6R)-5,10-methylene-5,6,7,8-tetrahydrofolate + glycine + H2O = (6S)-5,6,7,8-tetrahydrofolate + L-serine. It functions in the pathway one-carbon metabolism; tetrahydrofolate interconversion. Its function is as follows. Interconversion of serine and glycine. The sequence is that of Serine hydroxymethyltransferase, cytosolic (SHMT-1) from Encephalitozoon cuniculi (strain GB-M1) (Microsporidian parasite).